Here is a 561-residue protein sequence, read N- to C-terminus: Trehalose-6-phosphate hydrolase (561 aa).

Residue aspartate 203 is the Nucleophile of the active site. The active-site Proton donor is the glutamate 254.

This sequence belongs to the glycosyl hydrolase 13 family.

The protein resides in the cytoplasm. It catalyses the reaction alpha,alpha-trehalose 6-phosphate + H2O = D-glucose 6-phosphate + D-glucose. Activity is stimulated by high salt concentrations with different efficiencies depending on the kind of salt. In vitro, inhibited by glucose. In terms of biological role, hydrolyzes trehalose-6-phosphate to glucose and glucose 6-phosphate. Can also very effectively hydrolyze p-nitrophenyl-alpha-D-glucopyranoside, but not lactose, maltose, sucrose or sucrose-6-phosphate. Trehalose is also hydrolyzed, but to a much smaller extent than trehalose-6-phosphate. This Bacillus subtilis (strain 168) protein is Trehalose-6-phosphate hydrolase.